Reading from the N-terminus, the 91-residue chain is Small ribosomal subunit protein uS17 (91 aa).

It belongs to the universal ribosomal protein uS17 family. Part of the 30S ribosomal subunit.

Functionally, one of the primary rRNA binding proteins, it binds specifically to the 5'-end of 16S ribosomal RNA. The protein is Small ribosomal subunit protein uS17 of Malacoplasma penetrans (strain HF-2) (Mycoplasma penetrans).